The sequence spans 466 residues: Chromosomal replication initiator protein DnaA (466 aa).

A domain I, interacts with DnaA modulators region spans residues 1–77 (MSQEIWADVL…GAEHPQVEFQ (77 aa)). Residues 77-121 (QVLPAAQDALLLPNDPPPAPEAAAPTPKTKAAPTPPPSTPGDNRK) form a domain II region. Residues 87–122 (LLPNDPPPAPEAAAPTPKTKAAPTPPPSTPGDNRKT) form a disordered region. The span at 97–108 (EAAAPTPKTKAA) shows a compositional bias: low complexity. A domain III, AAA+ region region spans residues 122–338 (TLNPKYTFEN…GALMRVVAFA (217 aa)). Positions 166, 168, 169, and 170 each coordinate ATP. Residues 339–466 (SLNNVPFSRA…GKEEEEEVGA (128 aa)) form a domain IV, binds dsDNA region.

This sequence belongs to the DnaA family. As to quaternary structure, oligomerizes as a right-handed, spiral filament on DNA at oriC.

The protein resides in the cytoplasm. Its function is as follows. Plays an essential role in the initiation and regulation of chromosomal replication. ATP-DnaA binds to the origin of replication (oriC) to initiate formation of the DNA replication initiation complex once per cell cycle. Binds the DnaA box (a 9 base pair repeat at the origin) and separates the double-stranded (ds)DNA. Forms a right-handed helical filament on oriC DNA; dsDNA binds to the exterior of the filament while single-stranded (ss)DNA is stabiized in the filament's interior. The ATP-DnaA-oriC complex binds and stabilizes one strand of the AT-rich DNA unwinding element (DUE), permitting loading of DNA polymerase. After initiation quickly degrades to an ADP-DnaA complex that is not apt for DNA replication. Binds acidic phospholipids. Strand separation requires the DnaA boxes and adjacent DnaA-trio motifs but works equally well with ADP or ATP. The sequence is that of Chromosomal replication initiator protein DnaA from Deinococcus radiodurans (strain ATCC 13939 / DSM 20539 / JCM 16871 / CCUG 27074 / LMG 4051 / NBRC 15346 / NCIMB 9279 / VKM B-1422 / R1).